The sequence spans 231 residues: CLAVATA3/ESR (CLE)-related protein 4B-1 (231 aa).

The N-terminal stretch at 1–21 (MATNTMLCLLILSVVLALAFA) is a signal peptide. Residues 21-83 (ATNKKGDEEP…SNLLPNNNWM (63 aa)) form a required for secretion from the host cytoplasm to the host apoplasm region. Asparagine 32 is a glycosylation site (N-linked (GlcNAc...) asparagine). The disordered stretch occupies residues 116 to 231 (RKTGMHSQRH…APAGPDPIHH (116 aa)). Basic and acidic residues-rich tracts occupy residues 125–137 (HHEE…EKRV) and 144–221 (PIHH…EKRG). One copy of the A-1 repeat lies at 127-135 (EETTLEQEK). A 5 X approximate repeat A region spans residues 127–219 (EETTLEQEKR…HEETTFEQEK (93 aa)). The stretch at 136–147 (RVAGAGPDPIHH) is one CLE-1 repeat. Residues 136 to 231 (RVAGAGPDPI…APAGPDPIHH (96 aa)) are 5 X approximate repeat CLE. The A-2 repeat unit spans residues 148-156 (QDTTLEQEK). The CLE-2 repeat unit spans residues 157–168 (RAVPAGPDPKHH). An A-3 repeat occupies 169-177 (EETTLEQEK). The CLE-3 repeat unit spans residues 178 to 189 (RAVPAGPDPKHH). Residues 190 to 198 (EETTLEQEK) form an A-4 repeat. One copy of the CLE-4 repeat lies at 199-210 (RAVPAGPDPKHH). The stretch at 211 to 219 (EETTFEQEK) is one A-5 repeat. One copy of the CLE-5 repeat lies at 220-231 (RGAPAGPDPIHH).

This sequence belongs to the CLV3/ESR signal peptide family. Highly expressed exclusively within the dorsal esophageal gland cell during syncytium formation in host plants.

The protein resides in the secreted. It localises to the host cytoplasm. Its subcellular location is the host extracellular space. The protein localises to the extracellular space. It is found in the apoplast. Mimics host plant CLE extracellular signal peptides that regulate cell fate. May play a role in the differentiation or division of feeding cells (syncytia) induced in plant roots during infection. This is CLAVATA3/ESR (CLE)-related protein 4B-1 (CLE-4B-1) from Globodera rostochiensis (Golden nematode worm).